The chain runs to 311 residues: tRNA dimethylallyltransferase (311 aa).

9 to 16 (GPTAVGKT) lines the ATP pocket. Residue 11 to 16 (TAVGKT) participates in substrate binding. The tract at residues 34–37 (DSMQ) is interaction with substrate tRNA.

The protein belongs to the IPP transferase family. In terms of assembly, monomer. It depends on Mg(2+) as a cofactor.

It catalyses the reaction adenosine(37) in tRNA + dimethylallyl diphosphate = N(6)-dimethylallyladenosine(37) in tRNA + diphosphate. Catalyzes the transfer of a dimethylallyl group onto the adenine at position 37 in tRNAs that read codons beginning with uridine, leading to the formation of N6-(dimethylallyl)adenosine (i(6)A). This chain is tRNA dimethylallyltransferase, found in Clostridium botulinum (strain Okra / Type B1).